A 986-amino-acid polypeptide reads, in one-letter code: Probable ATP-dependent RNA helicase ddx42 (986 aa).

Disordered regions lie at residues 1 to 149 (MSKR…DEDD), 165 to 192 (AAID…DIDN), and 206 to 252 (QLAN…IEPL). Residues 29–82 (SNINNNNNSNNNNNNNNNNNNNNNNNNNKNNIGTGINLNIKNNNNINNNNNKSG) are compositionally biased toward low complexity. A compositionally biased stretch (polar residues) spans 105–117 (PPKSSMTTLNKSP). Positions 119–137 (NFENASSNNNNNNNNNNQE) are enriched in low complexity. Positions 217–236 (DDDVDYSSLDDDDGYFDDEE) are enriched in acidic residues. Positions 305-333 (TSFGHYGFDDILLQAIAKQSIETPTPIQK) match the Q motif motif. The Helicase ATP-binding domain maps to 336–511 (IPIALSGRDL…RTILSDPIKI (176 aa)). ATP is bound at residue 349-356 (AKTGSGKT). Positions 459-462 (DEAD) match the DEAD box motif. Positions 522–684 (DITQIVQVLK…FVPPELIDVA (163 aa)) constitute a Helicase C-terminal domain. The disordered stretch occupies residues 688–986 (PHFKRERGGG…FNQRSQYNRR (299 aa)). Over residues 696–723 (GGGGGSNRGRGRGGGGVGYRRNSRGGGV) the composition is skewed to gly residues. 2 stretches are compositionally biased toward low complexity: residues 753-764 (NPNNTDNSEINN) and 771-978 (NNEN…NNFN).

The protein belongs to the DEAD box helicase family. DDX42 subfamily.

The protein localises to the nucleus. The catalysed reaction is ATP + H2O = ADP + phosphate + H(+). Probable ATP-dependent RNA helicase which may bind to partially double-stranded RNAs (dsRNAs) in order to unwind RNA secondary structures. This is Probable ATP-dependent RNA helicase ddx42 (ddx42) from Dictyostelium discoideum (Social amoeba).